Reading from the N-terminus, the 424-residue chain is Protein ImpB (424 aa).

The 188-residue stretch at 2–189 folds into the UmuC domain; it reads FALADINSFY…QPVGEVWGVG (188 aa).

It belongs to the DNA polymerase type-Y family.

Functionally, involved in UV protection and mutation. The protein is Protein ImpB (impB) of Salmonella typhimurium.